We begin with the raw amino-acid sequence, 201 residues long: Recombination protein RecR (201 aa).

The C4-type zinc finger occupies 57 to 72; sequence CKLCQIYTEQPLCNIC. The Toprim domain occupies 80–175; the sequence is TLLCVVESPA…KCSRIAHGVP (96 aa).

This sequence belongs to the RecR family.

In terms of biological role, may play a role in DNA repair. It seems to be involved in an RecBC-independent recombinational process of DNA repair. It may act with RecF and RecO. This Coxiella burnetii (strain RSA 493 / Nine Mile phase I) protein is Recombination protein RecR.